A 306-amino-acid polypeptide reads, in one-letter code: MDAVHVRAPGKVNVFMRVGPLRHDGYHDVATAYQALSLYEDVRAYPADDISVTFAGGSVDTSALPTDGTNLAVKAAKLLAKRTGFTGGVRLEIDKRVPIAGGMGGGSADAAATLVACDALWGTELGREELLALAARLGADVPFALVGGTAIGTGRGDRLSPALATGQFHWVLAFAEGQLSTPTVYSELDRHRERHASEIPPAQRAPGVDAGVLQALRAGDAAMLAEVLSNDLQAPAIHLAPSIAEVLELGELNGALAGIVSGSGPTVAFLAADLDNALDVQIALSAARVRVVRATGPVHGARVLSD.

Residue Lys11 is part of the active site. 98–108 (PIAGGMGGGSA) is a binding site for ATP. Asp140 is a catalytic residue.

This sequence belongs to the GHMP kinase family. IspE subfamily.

The enzyme catalyses 4-CDP-2-C-methyl-D-erythritol + ATP = 4-CDP-2-C-methyl-D-erythritol 2-phosphate + ADP + H(+). It participates in isoprenoid biosynthesis; isopentenyl diphosphate biosynthesis via DXP pathway; isopentenyl diphosphate from 1-deoxy-D-xylulose 5-phosphate: step 3/6. In terms of biological role, catalyzes the phosphorylation of the position 2 hydroxy group of 4-diphosphocytidyl-2C-methyl-D-erythritol. The polypeptide is 4-diphosphocytidyl-2-C-methyl-D-erythritol kinase (Leifsonia xyli subsp. xyli (strain CTCB07)).